Here is a 300-residue protein sequence, read N- to C-terminus: Solute carrier family 25 member 35 (300 aa).

Solcar repeat units lie at residues 1-90 (MDFL…AESR), 100-193 (HSPV…IKDL), and 203-294 (QSWK…LRSF). 6 consecutive transmembrane segments (helical) span residues 38–58 (TYQR…KVDG), 59–79 (LAAL…MNGI), 91–119 (GYLH…GAYL), 169–190 (AVGG…FSSI), 205–225 (WKVA…AMTP), and 277–300 (LGPH…TYAK).

The protein belongs to the mitochondrial carrier (TC 2.A.29) family.

It localises to the mitochondrion inner membrane. It carries out the reaction a dicarboxylate(in) + sulfate(out) = a dicarboxylate(out) + sulfate(in). Putative antiporter that exchanges dicarboxylates and sulfur oxoanions across the inner membrane of mitochondria. The polypeptide is Solute carrier family 25 member 35 (Slc25a35) (Mus musculus (Mouse)).